Here is a 342-residue protein sequence, read N- to C-terminus: Polycomb group RING finger protein 2 (342 aa).

The RING-type zinc-finger motif lies at 18–57; that stretch reads CALCGGYFIDATTIVECLHSFCKTCIVRYLETNKYCPMCD. Residues K51 and K88 each participate in a glycyl lysine isopeptide (Lys-Gly) (interchain with G-Cter in SUMO2) cross-link. Residues 81-95 carry the Nuclear localization signal motif; sequence KLVPGLFKDEMKRRR. Phosphothreonine; by PKA is present on T237. The interval 237–342 is disordered; that stretch reads TLPTVPTPSE…MTVNGAPCPP (106 aa). Residues 243–253 show a composition bias toward polar residues; that stretch reads TPSEGTNTSGA. The span at 263 to 318 shows a compositional bias: low complexity; that stretch reads APSPATLPATSSSLPSPATPSHGSPSSHGPPATHPTSPTPPSTAAGTTTATNGGTS. Residues 319–328 are compositionally biased toward polar residues; sequence NCLQTPSSTS. Position 334 is a phosphothreonine; by PKA (T334).

As to quaternary structure, exists as both a monomer and homodimer. Component of a PRC1-like complex. Interacts with CBX8, RING1 and RNF2. Interacts with CBX7. Interacts with PHC2. Post-translationally, phosphorylated. Homodimer formation is regulated by phosphorylation with only unphosphorylated proteins forming homodimers. In terms of tissue distribution, expressed in embryonic stem cells. Expressed in a variety of tumor cells and in neural tissues.

Its subcellular location is the nucleus. Transcriptional repressor. Binds specifically to the DNA sequence 5'-GACTNGACT-3'. Has tumor suppressor activity. May play a role in control of cell proliferation and/or neural cell development. Regulates proliferation of early T progenitor cells by maintaining expression of HES1. Also plays a role in antero-posterior specification of the axial skeleton and negative regulation of the self-renewal activity of hematopoietic stem cells. Component of a Polycomb group (PcG) multiprotein PRC1-like complex, a complex class required to maintain the transcriptionally repressive state of many genes, including Hox genes, throughout development. PcG PRC1 complex acts via chromatin remodeling and modification of histones; it mediates monoubiquitination of histone H2A 'Lys-119', rendering chromatin heritably changed in its expressibility. Within the PRC1-like complex, regulates RNF2 ubiquitin ligase activity. This Mus musculus (Mouse) protein is Polycomb group RING finger protein 2 (Pcgf2).